We begin with the raw amino-acid sequence, 968 residues long: Isoleucine--tRNA ligase (968 aa).

Positions 68–78 (PYANGALHMGH) match the 'HIGH' region motif. An L-isoleucyl-5'-AMP-binding site is contributed by E582. Residues 623 to 627 (KMSKS) carry the 'KMSKS' region motif. Residue K626 participates in ATP binding. C936, C939, C956, and C959 together coordinate Zn(2+).

The protein belongs to the class-I aminoacyl-tRNA synthetase family. IleS type 1 subfamily. In terms of assembly, monomer. The cofactor is Zn(2+).

It is found in the cytoplasm. It carries out the reaction tRNA(Ile) + L-isoleucine + ATP = L-isoleucyl-tRNA(Ile) + AMP + diphosphate. Catalyzes the attachment of isoleucine to tRNA(Ile). As IleRS can inadvertently accommodate and process structurally similar amino acids such as valine, to avoid such errors it has two additional distinct tRNA(Ile)-dependent editing activities. One activity is designated as 'pretransfer' editing and involves the hydrolysis of activated Val-AMP. The other activity is designated 'posttransfer' editing and involves deacylation of mischarged Val-tRNA(Ile). The polypeptide is Isoleucine--tRNA ligase (Prochlorococcus marinus (strain AS9601)).